The primary structure comprises 710 residues: Probable inactive DNA (cytosine-5)-methyltransferase DRM3 (710 aa).

A disordered region spans residues 1 to 21 (MADMRRRNGSGGSSNHERNEQ). The region spanning 52-92 (SGSNVKSLLIEMGFCPTLVQKAIDENGQDDFELLLEILTKS) is the UBA 1 domain. Residues 167 to 184 (ESEDSLDGAEINEEDEDV) are compositionally biased toward acidic residues. The interval 167–192 (ESEDSLDGAEINEEDEDVTPVTARGP) is disordered. In terms of domain architecture, UBA 2 spans 198-242 (QLFETMDKTLRLLEMGFSNDEISMAIEKIGTKGQISVLAESIVTG). Residues 282–360 (AQKEDGGGGS…MGDSSSFMET (79 aa)) form a disordered region. The segment covering 339–350 (YDDRGKRLRPED) has biased composition (basic and acidic residues). The 332-residue stretch at 379 to 710 (QPRLSQSLGP…RVTKRVRDMM (332 aa)) folds into the SAM-dependent MTase DRM-type domain.

Belongs to the class I-like SAM-binding methyltransferase superfamily. DRM-methyltransferase family. Interacts with Pol V.

The protein localises to the nucleus. Functionally, catalytically inactive DNA methyltransferase that acts as regulatory factor for DRM2-mediated DNA methylation. Required for maintenance of non-CpG DNA methylation. Required for normal establishment and maintenance of RNA-directed DNA methylation (RdDM) and accumulation of specific repeat-associated small interfering RNAs (siRNAs). Required for nucleolus organizer region (NOR) nuclear organization during interphase. Acts downstream of the production of siRNAs. May promote RNA polymerase V (Pol V) transcriptional elongation or assist in the stabilization of Pol V transcripts. The polypeptide is Probable inactive DNA (cytosine-5)-methyltransferase DRM3 (Arabidopsis thaliana (Mouse-ear cress)).